A 196-amino-acid polypeptide reads, in one-letter code: GTP cyclohydrolase 1 (196 aa).

Residues Cys-86, His-89, and Cys-158 each coordinate Zn(2+).

It belongs to the GTP cyclohydrolase I family. In terms of assembly, toroid-shaped homodecamer, composed of two pentamers of five dimers.

It carries out the reaction GTP + H2O = 7,8-dihydroneopterin 3'-triphosphate + formate + H(+). Its pathway is cofactor biosynthesis; 7,8-dihydroneopterin triphosphate biosynthesis; 7,8-dihydroneopterin triphosphate from GTP: step 1/1. The polypeptide is GTP cyclohydrolase 1 (Clostridium botulinum (strain ATCC 19397 / Type A)).